The chain runs to 495 residues: MSRSMALSQLLPDVALPHDVQVSGLVMDSRTVAPGDAFVAIAGFGAHGLGFVEQARANGATAVLFEPPAPDGLPVPVDAIAVPGLRARLGVMADQFHGRPSHAMRMVGVTGTNGKTSTVQLLAQALTLLGTPTGTLGTLGVGLYGAAVSTGFTTPLVLPTHALLAQLRDEGAQAVAMEVSSHALDQGRVDAVHFDVAVFTNLTRDHLDYHGEMAQYGAAKAKLFTRPGLKAAVVNLDDGFGRTLFASRDPVLRAIGVSSRAHADASVSAQALQLDHNGINFALNIQGEVHPVHSPLLGRFNVDNLLAVAGALWALDIAPAQIATVLGQLQPIHGRMNRLGGAHGAPLVVVDYAHTPDALEQALSSLRSHAQDRLICVFGCGGERDTGKRPQMAAIAELNADVAIVTDDNPRGEDGDAIVADILRGFARPDAAIVQRDRAAAIHQAIAMASASDIVLIAGKGHEPYQEVAGVRHAFDDAIVAAQALLPRTVLGVRP.

S29 is a binding site for UDP-N-acetyl-alpha-D-muramoyl-L-alanyl-D-glutamate. Residue 111–117 (GTNGKTS) participates in ATP binding. UDP-N-acetyl-alpha-D-muramoyl-L-alanyl-D-glutamate is bound by residues 153–154 (TT), S180, Q186, and R188. Residue K220 is modified to N6-carboxylysine. Residues R384, 408–411 (DNPR), G459, and E463 contribute to the meso-2,6-diaminopimelate site. A Meso-diaminopimelate recognition motif motif is present at residues 408 to 411 (DNPR).

It belongs to the MurCDEF family. MurE subfamily. The cofactor is Mg(2+). Post-translationally, carboxylation is probably crucial for Mg(2+) binding and, consequently, for the gamma-phosphate positioning of ATP.

It localises to the cytoplasm. The enzyme catalyses UDP-N-acetyl-alpha-D-muramoyl-L-alanyl-D-glutamate + meso-2,6-diaminopimelate + ATP = UDP-N-acetyl-alpha-D-muramoyl-L-alanyl-gamma-D-glutamyl-meso-2,6-diaminopimelate + ADP + phosphate + H(+). Its pathway is cell wall biogenesis; peptidoglycan biosynthesis. Functionally, catalyzes the addition of meso-diaminopimelic acid to the nucleotide precursor UDP-N-acetylmuramoyl-L-alanyl-D-glutamate (UMAG) in the biosynthesis of bacterial cell-wall peptidoglycan. The sequence is that of UDP-N-acetylmuramoyl-L-alanyl-D-glutamate--2,6-diaminopimelate ligase from Xanthomonas oryzae pv. oryzae (strain MAFF 311018).